The following is a 340-amino-acid chain: Anthranilate phosphoribosyltransferase (340 aa).

5-phospho-alpha-D-ribose 1-diphosphate contacts are provided by residues glycine 82, 85 to 86 (GD), threonine 90, 92 to 95 (NIST), 110 to 118 (KHGSRSVSS), and serine 122. Glycine 82 is a binding site for anthranilate. Position 94 (serine 94) interacts with Mg(2+). Arginine 168 lines the anthranilate pocket. Mg(2+) contacts are provided by aspartate 227 and glutamate 228.

The protein belongs to the anthranilate phosphoribosyltransferase family. In terms of assembly, homodimer. Mg(2+) serves as cofactor.

The enzyme catalyses N-(5-phospho-beta-D-ribosyl)anthranilate + diphosphate = 5-phospho-alpha-D-ribose 1-diphosphate + anthranilate. The protein operates within amino-acid biosynthesis; L-tryptophan biosynthesis; L-tryptophan from chorismate: step 2/5. In terms of biological role, catalyzes the transfer of the phosphoribosyl group of 5-phosphorylribose-1-pyrophosphate (PRPP) to anthranilate to yield N-(5'-phosphoribosyl)-anthranilate (PRA). This Hydrogenovibrio crunogenus (strain DSM 25203 / XCL-2) (Thiomicrospira crunogena) protein is Anthranilate phosphoribosyltransferase.